A 178-amino-acid polypeptide reads, in one-letter code: Large ribosomal subunit protein uL5 (178 aa).

At A2 the chain carries N-acetylalanine. Residue K38 forms a Glycyl lysine isopeptide (Lys-Gly) (interchain with G-Cter in SUMO2) linkage. A phosphothreonine mark is found at T44 and T47. At K52 the chain carries N6-acetyllysine; alternate. K52 is covalently cross-linked (Glycyl lysine isopeptide (Lys-Gly) (interchain with G-Cter in SUMO2); alternate). K85 carries the N6-acetyllysine modification. A Glycyl lysine isopeptide (Lys-Gly) (interchain with G-Cter in SUMO2) cross-link involves residue K154.

Belongs to the universal ribosomal protein uL5 family. Component of the large ribosomal subunit (LSU). Part of the 5S RNP complex, which is a LSU subcomplex composed of the 5S RNA, RPL5 and RPL11. Component of a hexameric 5S RNP precursor complex, composed of 5S RNA, RRS1, RPF2/BXDC1, RPL5, RPL11 and HEATR3; this complex acts as a precursor for ribosome assembly. Interacts with PML. Interacts with MDM2 (via its RanBP2-type zinc finger domain); negatively regulates MDM2-mediated TP53 ubiquitination and degradation. Interacts with NOP53; retains RPL11 into the nucleolus.

The protein resides in the nucleus. The protein localises to the nucleolus. It is found in the cytoplasm. Its function is as follows. Component of the ribosome, a large ribonucleoprotein complex responsible for the synthesis of proteins in the cell. The small ribosomal subunit (SSU) binds messenger RNAs (mRNAs) and translates the encoded message by selecting cognate aminoacyl-transfer RNA (tRNA) molecules. The large subunit (LSU) contains the ribosomal catalytic site termed the peptidyl transferase center (PTC), which catalyzes the formation of peptide bonds, thereby polymerizing the amino acids delivered by tRNAs into a polypeptide chain. The nascent polypeptides leave the ribosome through a tunnel in the LSU and interact with protein factors that function in enzymatic processing, targeting, and the membrane insertion of nascent chains at the exit of the ribosomal tunnel. As part of the 5S RNP/5S ribonucleoprotein particle it is an essential component of the LSU, required for its formation and the maturation of rRNAs. It also couples ribosome biogenesis to p53/TP53 activation. As part of the 5S RNP it accumulates in the nucleoplasm and inhibits MDM2, when ribosome biogenesis is perturbed, mediating the stabilization and the activation of TP53. Promotes nucleolar location of PML. The sequence is that of Large ribosomal subunit protein uL5 (RPL11) from Oryctolagus cuniculus (Rabbit).